Consider the following 677-residue polypeptide: Beta-galactosidase (677 aa).

Positions 1-23 (MPGFLVRILPLLLALLLLGPTRG) are cleaved as a signal peptide. Residues 24 to 28 (LRNAT) constitute a propeptide that is removed on maturation. An N-linked (GlcNAc...) asparagine glycan is attached at N26. 3 residues coordinate substrate: Y83, E129, and N187. E188 (proton donor) is an active-site residue. C195 and C230 are joined by a disulfide. N247 carries N-linked (GlcNAc...) asparagine glycosylation. E268 functions as the Nucleophile in the catalytic mechanism. Substrate is bound at residue Y333. Residues N464, N498, N545, and N555 are each glycosylated (N-linked (GlcNAc...) asparagine). C626 and C634 are oxidised to a cystine. The tract at residues 654-677 (SKPVEKKLMPSPPQKNKDSWLDHV) is disordered. A compositionally biased stretch (basic and acidic residues) spans 668–677 (KNKDSWLDHV).

The protein belongs to the glycosyl hydrolase 35 family. In terms of assembly, homodimer. May form higher multimers.

The protein localises to the lysosome. The enzyme catalyses Hydrolysis of terminal non-reducing beta-D-galactose residues in beta-D-galactosides.. Functionally, cleaves beta-linked terminal galactosyl residues from gangliosides, glycoproteins, and glycosaminoglycans. This is Beta-galactosidase (GLB1) from Pongo abelii (Sumatran orangutan).